The sequence spans 291 residues: N-acetylmannosamine kinase (291 aa).

ATP is bound by residues 5 to 12 (AIDIGGTK) and 132 to 139 (GVGGGVVS). 4 residues coordinate Zn(2+): His-156, Cys-166, Cys-168, and Cys-173.

The protein belongs to the ROK (NagC/XylR) family. NanK subfamily. As to quaternary structure, homodimer.

The enzyme catalyses an N-acyl-D-mannosamine + ATP = an N-acyl-D-mannosamine 6-phosphate + ADP + H(+). Its pathway is amino-sugar metabolism; N-acetylneuraminate degradation; D-fructose 6-phosphate from N-acetylneuraminate: step 2/5. Functionally, catalyzes the phosphorylation of N-acetylmannosamine (ManNAc) to ManNAc-6-P. In Escherichia coli (strain K12 / MC4100 / BW2952), this protein is N-acetylmannosamine kinase.